A 203-amino-acid polypeptide reads, in one-letter code: Endo-type membrane-bound lytic murein transglycosylase A (203 aa).

The N-terminal stretch at 1–15 (MKLRWFAFLMVLLAG) is a signal peptide. Residue C16 is the site of N-palmitoyl cysteine attachment. A lipid anchor (S-diacylglycerol cysteine) is attached at C16.

Belongs to the transglycosylase Slt family.

It localises to the cell outer membrane. It carries out the reaction Endolytic cleavage of the (1-&gt;4)-beta-glycosidic linkage between N-acetylmuramic acid (MurNAc) and N-acetylglucosamine (GlcNAc) residues in peptidoglycan with concomitant formation of a 1,6-anhydrobond in the MurNAc residue.. Functionally, murein-degrading enzyme. May play a role in recycling of muropeptides during cell elongation and/or cell division. Preferentially cleaves at a distance of more than two disaccharide units from the ends of the glycan chain. The polypeptide is Endo-type membrane-bound lytic murein transglycosylase A (Enterobacter sp. (strain 638)).